A 113-amino-acid polypeptide reads, in one-letter code: Large ribosomal subunit protein eL33 (113 aa).

Belongs to the eukaryotic ribosomal protein eL33 family.

This is Large ribosomal subunit protein eL33 (RPL35A) from Tetrahymena thermophila (strain SB210).